Here is a 216-residue protein sequence, read N- to C-terminus: Transmembrane emp24 domain-containing protein eca (216 aa).

A signal peptide spans 1–20 (MRDQFICLALLLCALHSACG). Residues 21–182 (LYFHISETER…FRHTSESTNS (162 aa)) are Lumenal-facing. Positions 30-126 (RKCFIEEVPD…QLRVHLDIQV (97 aa)) constitute a GOLD domain. A coiled-coil region spans residues 134–164 (ANVAQKEKLTELQLRIRQLLDQVEQITKEQN). Residues 183–203 (RVLWWSLAQTLVLVCMGFWQM) form a helical membrane-spanning segment. Residues 204–216 (RHLKSFFEAKKLV) are Cytoplasmic-facing. The short motif at 213 to 216 (KKLV) is the Prevents secretion from ER element.

Belongs to the EMP24/GP25L family.

It localises to the endoplasmic reticulum membrane. In terms of biological role, eca and bai are essential, though not redundant, for dorsoventral patterning of the embryo. Specifically required during early embryogenesis for the activity of maternal tkv, while the zygotic tkv is not affected. Involved in Golgi organization. The protein is Transmembrane emp24 domain-containing protein eca of Drosophila pseudoobscura pseudoobscura (Fruit fly).